A 165-amino-acid polypeptide reads, in one-letter code: Iron sulfur cluster assembly protein 1, mitochondrial (165 aa).

Residues 1–27 constitute a mitochondrion transit peptide; that stretch reads MLPVITRFARPALMAIRPVNAMGVLRA. Residues 132–136 form an SSQ1 binding region region; the sequence is LPPVK.

Belongs to the NifU family. As to quaternary structure, homodimer, but can exist as monomers or trimers. Oligomerization may be regulated by Zn(2+) availability. Component of the core Fe-S cluster (ISC) assembly machinery. Interacts with YFH1/frataxin with a 1 to 1 stoichiometry; the interaction is direct. Interacts with the mitochondrial co-chaperones JAC1 and SSQ1. Interacts with NFS1. Interacts with YAH1/ferredoxin; interacts with the reduced form. It depends on [2Fe-2S] cluster as a cofactor. Zn(2+) is required as a cofactor.

The protein localises to the mitochondrion matrix. Its pathway is cofactor biosynthesis; iron-sulfur cluster biosynthesis. Its function is as follows. Scaffold protein for the de novo synthesis of iron-sulfur (Fe-S) clusters within mitochondria, which is required for maturation of both mitochondrial and cytoplasmic [2Fe-2S] and [4Fe-4S] proteins. First, a [2Fe-2S] cluster is transiently assembled on the scaffold proteins ISU1 and ISU2. In a second step, the cluster is released from ISU1/ISU2, transferred to glutaredoxin GRX5, followed by the formation of mitochondrial [2Fe-2S] proteins, the synthesis of [4Fe-4S] clusters and their target-specific insertion into the recipient apoproteins. Cluster assembly on ISU1/ISU2 depends on the function of the cysteine desulfurase complex NFS1-ISD11, which serves as the sulfur donor for cluster synthesis, the iron-binding protein frataxin (YFH1) as the putative iron donor, and the electron transfer chain comprised of ferredoxin reductase ARH1 and ferredoxin YAH1, which receive their electrons from NADH. Fe-S cluster release from ISU1/ISU2 is achieved by interaction with the Hsp70 chaperone SSQ1, assisted by the DnaJ-like co-chaperone JAC1 and the nucleotide exchange factor MGE1. ISU1 is the major isoform in yeast, while ISU2 is not detectable in cells grown to stationary phase. Also involved in production of a sulfur precursor required for thiolation of cytoplasmic tRNAs. The protein is Iron sulfur cluster assembly protein 1, mitochondrial of Saccharomyces cerevisiae (strain ATCC 204508 / S288c) (Baker's yeast).